The chain runs to 437 residues: 3-ketoacyl-CoA thiolase (437 aa).

C99 serves as the catalytic Acyl-thioester intermediate. Catalysis depends on proton acceptor residues H392 and C422.

The protein belongs to the thiolase-like superfamily. Thiolase family. In terms of assembly, heterotetramer of two alpha chains (FadJ) and two beta chains (FadI).

It localises to the cytoplasm. The enzyme catalyses an acyl-CoA + acetyl-CoA = a 3-oxoacyl-CoA + CoA. It functions in the pathway lipid metabolism; fatty acid beta-oxidation. Functionally, catalyzes the final step of fatty acid oxidation in which acetyl-CoA is released and the CoA ester of a fatty acid two carbons shorter is formed. The sequence is that of 3-ketoacyl-CoA thiolase from Erwinia tasmaniensis (strain DSM 17950 / CFBP 7177 / CIP 109463 / NCPPB 4357 / Et1/99).